The chain runs to 478 residues: Cysteine protease ATG4B (478 aa).

Polar residues predominate over residues 1 to 15 (MTSLPDRGVSSSSSD). Residues 1–20 (MTSLPDRGVSSSSSDPLCEG) are disordered. Cysteine 164 (nucleophile) is an active-site residue. Active-site residues include aspartate 361 and histidine 363.

It belongs to the peptidase C54 family. In terms of assembly, interacts with ATG8. As to expression, constitutively expressed.

The protein resides in the cytoplasm. The catalysed reaction is [protein]-C-terminal L-amino acid-glycyl-phosphatidylethanolamide + H2O = [protein]-C-terminal L-amino acid-glycine + a 1,2-diacyl-sn-glycero-3-phosphoethanolamine. Functionally, cysteine protease that plays a key role in autophagy by mediating both proteolytic activation and delipidation of ATG8 family proteins. The protease activity is required for proteolytic activation of ATG8 family proteins: cleaves the C-terminal amino acid of ATG8 proteins to reveal a C-terminal glycine. Exposure of the glycine at the C-terminus is essential for ATG8 proteins conjugation to phosphatidylethanolamine (PE) and insertion to membranes, which is necessary for autophagy. In addition to the protease activity, also mediates delipidation of PE-conjugated ATG8 proteins. The sequence is that of Cysteine protease ATG4B (ATG4B) from Oryza sativa subsp. indica (Rice).